We begin with the raw amino-acid sequence, 360 residues long: Phospho-N-acetylmuramoyl-pentapeptide-transferase (360 aa).

Transmembrane regions (helical) follow at residues 24 to 44, 69 to 89, 92 to 112, 133 to 153, 158 to 178, 199 to 219, 239 to 259, 263 to 283, 288 to 308, and 337 to 357; these read RAVMAALTALAFSLMFGPWTI, GTPTMGGSLILTAITVSTLLW, WANPYIWILLGVLLATGALGF, MVWQSSVAIIAGLALFYLAAN, ILIVPFFKQIALPLGVVGFLV, GLATFPVVLVAAGLAIFAYAS, VVIFCTAMCGACLGFLWFNAY, VFMGDVGALALGAALGTVAVI, FVLVIMGGLFVVEAVSVMLQV, and QVVVRFWIITIVLVLIGLSTL.

Belongs to the glycosyltransferase 4 family. MraY subfamily. Requires Mg(2+) as cofactor.

The protein resides in the cell inner membrane. It catalyses the reaction UDP-N-acetyl-alpha-D-muramoyl-L-alanyl-gamma-D-glutamyl-meso-2,6-diaminopimeloyl-D-alanyl-D-alanine + di-trans,octa-cis-undecaprenyl phosphate = di-trans,octa-cis-undecaprenyl diphospho-N-acetyl-alpha-D-muramoyl-L-alanyl-D-glutamyl-meso-2,6-diaminopimeloyl-D-alanyl-D-alanine + UMP. It functions in the pathway cell wall biogenesis; peptidoglycan biosynthesis. Its function is as follows. Catalyzes the initial step of the lipid cycle reactions in the biosynthesis of the cell wall peptidoglycan: transfers peptidoglycan precursor phospho-MurNAc-pentapeptide from UDP-MurNAc-pentapeptide onto the lipid carrier undecaprenyl phosphate, yielding undecaprenyl-pyrophosphoryl-MurNAc-pentapeptide, known as lipid I. The chain is Phospho-N-acetylmuramoyl-pentapeptide-transferase from Neisseria meningitidis serogroup A / serotype 4A (strain DSM 15465 / Z2491).